The sequence spans 201 residues: Peptide deformylase (201 aa).

A disordered region spans residues 1–24 (MANHFSQLAKKSKTNGNSEKIAKE). 2 residues coordinate Fe cation: cysteine 121 and histidine 163. Glutamate 164 is a catalytic residue. Histidine 167 provides a ligand contact to Fe cation.

Belongs to the polypeptide deformylase family. It depends on Fe(2+) as a cofactor.

It catalyses the reaction N-terminal N-formyl-L-methionyl-[peptide] + H2O = N-terminal L-methionyl-[peptide] + formate. In terms of biological role, removes the formyl group from the N-terminal Met of newly synthesized proteins. Requires at least a dipeptide for an efficient rate of reaction. N-terminal L-methionine is a prerequisite for activity but the enzyme has broad specificity at other positions. This Prochlorococcus marinus (strain MIT 9312) protein is Peptide deformylase.